Reading from the N-terminus, the 971-residue chain is Breast cancer type 2 susceptibility protein homolog (971 aa).

The segment covering 1–15 (MDQNGASGSHPNRLS) has biased composition (polar residues). Disordered regions lie at residues 1–30 (MDQNGASGSHPNRLSQGRGAHARERGATVS), 130–155 (SRKRDPKSHKAVQNEKRRGSSGLSVQ), 349–395 (KLKL…DQPN), and 420–466 (MQCS…SSHQ). The segment covering 130–139 (SRKRDPKSHK) has biased composition (basic residues). A compositionally biased stretch (basic and acidic residues) spans 349 to 364 (KLKLEPSSQKEQKSSK). Composition is skewed to polar residues over residues 375–392 (SKQSCDINTKNEGTTILD), 420–432 (MQCSNGPSTSKNA), and 453–466 (KQTPNKSQTISSHQ). BRCA2 repeat units lie at residues 570 to 604 (AEPEFCGFRTASNKAIPISEKMKIKTAEFMAEFQS), 671 to 705 (NESQFFGFRTASNKAIEITEAMEKRGAMFLAQSKA), and 746 to 780 (SETEFFGFRTASNKGIVISENTKIKVAQFMSEFQA). The interval 916-971 (MERFAPKPSSTSTPLADRDLNRSKDCTKNRQDAEDMSPICMQPKKSRRLGLSRSRY) is disordered. Positions 931-948 (ADRDLNRSKDCTKNRQDA) are enriched in basic and acidic residues. The span at 959–971 (KKSRRLGLSRSRY) shows a compositional bias: basic residues.

In terms of assembly, interacts with Rad9. Interacts with spn-A/Rad51. Interacts with cyclin CycG.

It is found in the nucleus. In terms of biological role, involved in and required for double-strand break repair by meiotic and mitotic homologous recombination. During meiosis, has a dual role in the repair of meiotic double-stranded breaks and the efficient activation of the meiotic recombination checkpoint. This chain is Breast cancer type 2 susceptibility protein homolog, found in Drosophila melanogaster (Fruit fly).